The following is a 413-amino-acid chain: Serine hydroxymethyltransferase (413 aa).

Residues Leu-115 and 119–121 (GHL) contribute to the (6S)-5,6,7,8-tetrahydrofolate site. Lys-224 bears the N6-(pyridoxal phosphate)lysine mark.

The protein belongs to the SHMT family. As to quaternary structure, homodimer. Requires pyridoxal 5'-phosphate as cofactor.

The protein resides in the cytoplasm. The enzyme catalyses (6R)-5,10-methylene-5,6,7,8-tetrahydrofolate + glycine + H2O = (6S)-5,6,7,8-tetrahydrofolate + L-serine. The protein operates within one-carbon metabolism; tetrahydrofolate interconversion. It participates in amino-acid biosynthesis; glycine biosynthesis; glycine from L-serine: step 1/1. Functionally, catalyzes the reversible interconversion of serine and glycine with tetrahydrofolate (THF) serving as the one-carbon carrier. This reaction serves as the major source of one-carbon groups required for the biosynthesis of purines, thymidylate, methionine, and other important biomolecules. Also exhibits THF-independent aldolase activity toward beta-hydroxyamino acids, producing glycine and aldehydes, via a retro-aldol mechanism. In Mycoplasma capricolum subsp. capricolum (strain California kid / ATCC 27343 / NCTC 10154), this protein is Serine hydroxymethyltransferase.